Consider the following 64-residue polypeptide: Large ribosomal subunit protein bL35 (64 aa).

The protein belongs to the bacterial ribosomal protein bL35 family.

The protein is Large ribosomal subunit protein bL35 of Acidothermus cellulolyticus (strain ATCC 43068 / DSM 8971 / 11B).